The chain runs to 161 residues: RNA pyrophosphohydrolase (161 aa).

One can recognise a Nudix hydrolase domain in the interval 12–154 (PYRPGVGMMI…KRKLYQAVVK (143 aa)). The Nudix box motif lies at 46–67 (GGIVPGETPSIAAMREMLEEIG).

Belongs to the Nudix hydrolase family. RppH subfamily. The cofactor is a divalent metal cation.

Its function is as follows. Accelerates the degradation of transcripts by removing pyrophosphate from the 5'-end of triphosphorylated RNA, leading to a more labile monophosphorylated state that can stimulate subsequent ribonuclease cleavage. The chain is RNA pyrophosphohydrolase from Rickettsia bellii (strain OSU 85-389).